The following is a 446-amino-acid chain: Nuclear envelope integral membrane protein 1 (446 aa).

An N-terminal signal peptide occupies residues 1-37 (MAGFMKYKSVSTTIETVRLKLILTAVLFLFPFSQTSG). N-linked (GlcNAc...) asparagine glycans are attached at residues asparagine 62, asparagine 118, and asparagine 129. Transmembrane regions (helical) follow at residues 154 to 174 (IYLFLVFLAGVLLFFYADVLS), 181 to 201 (YSAGMSTGMIASLLILIFIVY), 209 to 229 (PFYMLVVGGWSFSLYIIQLVF), 239 to 259 (HWHLAIGYVFVVGFISFAVCY), and 269 to 289 (SINILSWALQIFGLLLVYAGI). The segment covering 410-431 (LFSTDEEDKEEEEDGWETEDDI) has biased composition (acidic residues). The interval 410–446 (LFSTDEEDKEEEEDGWETEDDIKPEVTSPRMNNTRGK) is disordered. A glycan (N-linked (GlcNAc...) asparagine) is linked at asparagine 441.

The protein belongs to the NEMP family.

It localises to the nucleus inner membrane. Contributes to nuclear envelope stiffness in germ cells. Involved in male and female fertility. Essential for normal erythropoiesis. Required for efficient nuclear envelope opening and enucleation during the late stages of erythroblast maturation. This is Nuclear envelope integral membrane protein 1 from Danio rerio (Zebrafish).